Here is a 173-residue protein sequence, read N- to C-terminus: MKRVFLVGYMGAGKTTVGKELAKLAGLSFIDLDYYIEGRYHKAVSQIFAERGEEAFREIERNMLHEVAEFEDVLISTGGGAPCFFDNMEFMNASGTTVYLKVSVEELAKRLELCKHTRPVLKGRSGEELRAFIAESLEKRNPFYTKASITFDAEKMLTESDVHDISNALMKIL.

11 to 16 (GAGKTT) serves as a coordination point for ATP. Thr-15 contacts Mg(2+). Residues Asp-33, Arg-57, and Gly-79 each contribute to the substrate site. Residue Arg-118 participates in ATP binding. Residue Arg-140 coordinates substrate.

The protein belongs to the shikimate kinase family. In terms of assembly, monomer. It depends on Mg(2+) as a cofactor.

The protein localises to the cytoplasm. It catalyses the reaction shikimate + ATP = 3-phosphoshikimate + ADP + H(+). It functions in the pathway metabolic intermediate biosynthesis; chorismate biosynthesis; chorismate from D-erythrose 4-phosphate and phosphoenolpyruvate: step 5/7. Catalyzes the specific phosphorylation of the 3-hydroxyl group of shikimic acid using ATP as a cosubstrate. This is Shikimate kinase from Parabacteroides distasonis (strain ATCC 8503 / DSM 20701 / CIP 104284 / JCM 5825 / NCTC 11152).